Here is a 164-residue protein sequence, read N- to C-terminus: uncharacterized protein (164 aa).

The 130-residue stretch at 28 to 157 (EAEILYQLQG…LIDVLARMRN (130 aa)) folds into the HTH marR-type domain. Positions 71–94 (QSDLQKKVNIDSAAVTRHLKQLES) form a DNA-binding region, H-T-H motif.

This is an uncharacterized protein from Bacillus subtilis (strain 168).